Here is a 961-residue protein sequence, read N- to C-terminus: DNA repair endonuclease XPF (961 aa).

Disordered regions lie at residues 1-27, 451-485, and 674-693; these read MADS…SADT, NYAK…PPLA, and PTDE…QATK. The segment covering 13 to 22 has biased composition (basic and acidic residues); the sequence is TENERPKEVE. The segment covering 458–469 has biased composition (polar residues); that stretch reads TRSAPPKNVSSN. Residues 697–777 enclose the ERCC4 domain; it reads KVIVDMREFR…KPILLIEFDQ (81 aa).

It belongs to the XPF family. As to quaternary structure, heterodimer. Interacts with hdm.

It is found in the nucleus. Functionally, implicated in recombination events during meiosis, mostly in meiotic exchange. May directly resolve Holliday junctions within recombination intermediates leading to DNA exchange. Also required for the repair of mismatches within meiotic heteroduplex DNA and for nucleotide excision repair. The sequence is that of DNA repair endonuclease XPF (mei-9) from Drosophila melanogaster (Fruit fly).